The sequence spans 858 residues: Low-density lipoprotein receptor-related protein 12 (858 aa).

Positions Met-1–Ala-32 are cleaved as a signal peptide. The Extracellular portion of the chain corresponds to Glu-33–Arg-492. 9 disulfides stabilise this stretch: Cys-47-Cys-76, Cys-103-Cys-122, Cys-166-Cys-178, Cys-173-Cys-191, Cys-185-Cys-200, Cys-215-Cys-232, Cys-222-Cys-245, Cys-239-Cys-254, and Cys-259-Cys-285. Residues Cys-47–Gly-159 form the CUB 1 domain. An N-linked (GlcNAc...) asparagine glycan is attached at Asn-75. LDL-receptor class A domains lie at Asp-165–Ala-201 and Pro-214–Asp-255. The region spanning Cys-259 to Asp-372 is the CUB 2 domain. Residues Asn-284 and Asn-366 are each glycosylated (N-linked (GlcNAc...) asparagine). 3 consecutive LDL-receptor class A domains span residues Phe-374 to Thr-411, Met-412 to Phe-449, and Phe-450 to Pro-486. 9 disulfides stabilise this stretch: Cys-375–Cys-388, Cys-382–Cys-401, Cys-395–Cys-410, Cys-413–Cys-426, Cys-420–Cys-439, Cys-433–Cys-448, Cys-451–Cys-463, Cys-458–Cys-476, and Cys-470–Cys-485. Asn-409 is a glycosylation site (N-linked (GlcNAc...) asparagine). A glycan (N-linked (GlcNAc...) asparagine) is linked at Asn-441. The helical transmembrane segment at Val-493–Gly-513 threads the bilayer. The Cytoplasmic portion of the chain corresponds to Cys-514 to Cys-858. 2 disordered regions span residues Ala-619 to Ala-721 and Ser-746 to Glu-767. Positions Ser-712 to Ala-721 are enriched in low complexity. Polar residues predominate over residues Ser-746–Pro-755.

It belongs to the LDLR family. May interact with RACK1, ZFYVE9 and NMRK2.

Its subcellular location is the membrane. The protein resides in the coated pit. In terms of biological role, probable receptor, which may be involved in the internalization of lipophilic molecules and/or signal transduction. May act as a tumor suppressor. The chain is Low-density lipoprotein receptor-related protein 12 (Lrp12) from Mus musculus (Mouse).